Consider the following 267-residue polypeptide: Thiamine thiazole synthase (267 aa).

NAD(+)-binding positions include Ser41, Glu60–Arg61, Gly68, Val132, and His160–Asp162. 2 residues coordinate Fe cation: Asp162 and His177. Met227 lines the NAD(+) pocket. Arg237 provides a ligand contact to glycine.

It belongs to the THI4 family. As to quaternary structure, homooctamer; tetramer of dimers. Fe(2+) serves as cofactor.

The enzyme catalyses hydrogen sulfide + glycine + NAD(+) = ADP-5-ethyl-4-methylthiazole-2-carboxylate + nicotinamide + 3 H2O + H(+). It participates in cofactor biosynthesis; thiamine diphosphate biosynthesis. In terms of biological role, involved in the biosynthesis of the thiazole moiety of thiamine. Catalyzes the conversion of NAD and glycine to adenosine diphosphate 5-(2-hydroxyethyl)-4-methylthiazole-2-carboxylate (ADT), an adenylated thiazole intermediate, using free sulfide as a source of sulfur. This Saccharolobus solfataricus (strain ATCC 35092 / DSM 1617 / JCM 11322 / P2) (Sulfolobus solfataricus) protein is Thiamine thiazole synthase.